The primary structure comprises 238 residues: Uridylate kinase (238 aa).

K12–G15 contributes to the ATP binding site. Residue G54 participates in UMP binding. Residues G55 and R59 each contribute to the ATP site. UMP contacts are provided by residues D74 and T135–T142. T162, Y168, and D171 together coordinate ATP.

Belongs to the UMP kinase family. Homohexamer.

The protein localises to the cytoplasm. It catalyses the reaction UMP + ATP = UDP + ADP. It participates in pyrimidine metabolism; CTP biosynthesis via de novo pathway; UDP from UMP (UMPK route): step 1/1. Its activity is regulated as follows. Inhibited by UTP. Functionally, catalyzes the reversible phosphorylation of UMP to UDP. The protein is Uridylate kinase of Bordetella avium (strain 197N).